The chain runs to 510 residues: Archaeosine synthase subunit alpha (510 aa).

Residues 427–510 (LGKFTINKAS…LKKGIAVKVR (84 aa)) form the PUA domain.

It belongs to the archaeosine synthase type 1 family. As to quaternary structure, forms a robust complex with the archaeosine synthase beta subunit RaSEA, likely an alpha(2)beta(2) heterotetrameric structure. Formation of this complex highly increases lysine transfer activity.

The catalysed reaction is 7-cyano-7-carbaguanosine(15) in tRNA + L-lysine = 7-N-[(5S)-5-amino-5-carboxypentyl]formamidino-7-deazaguanosine(15) in tRNA. It functions in the pathway tRNA modification; archaeosine-tRNA biosynthesis. Functions in the biosynthesis of archaeosine, a modified nucleoside present in the dihydrouridine loop (D-loop) of archaeal tRNAs. Catalyzes the addition of L-lysine to the cyano group of 7-cyano-7-deazaguanine (preQ0)-modified tRNAs at position 15, to generate q0kN15-tRNA, a q0N lysine adduct identified as 7-N-[(5S)-5-amino-5-carboxypentyl]formamidino-7-deazaguanosine. This is Archaeosine synthase subunit alpha from Thermoplasma acidophilum (strain ATCC 25905 / DSM 1728 / JCM 9062 / NBRC 15155 / AMRC-C165).